The following is a 300-amino-acid chain: Ribosomal RNA small subunit methyltransferase H (300 aa).

S-adenosyl-L-methionine is bound by residues 46–48, Asp-65, Phe-92, Asp-107, and Gln-114; that span reads GGH.

Belongs to the methyltransferase superfamily. RsmH family.

Its subcellular location is the cytoplasm. It catalyses the reaction cytidine(1402) in 16S rRNA + S-adenosyl-L-methionine = N(4)-methylcytidine(1402) in 16S rRNA + S-adenosyl-L-homocysteine + H(+). In terms of biological role, specifically methylates the N4 position of cytidine in position 1402 (C1402) of 16S rRNA. The chain is Ribosomal RNA small subunit methyltransferase H from Prochlorococcus marinus (strain AS9601).